A 710-amino-acid chain; its full sequence is Conserved oligomeric Golgi complex subunit 2 (710 aa).

Belongs to the COG2 family. In terms of assembly, component of the conserved oligomeric Golgi complex which is composed of eight different subunits and is required for normal Golgi morphology and localization.

It is found in the golgi apparatus membrane. Functionally, required for normal Golgi morphology and function. This Drosophila melanogaster (Fruit fly) protein is Conserved oligomeric Golgi complex subunit 2.